The chain runs to 738 residues: Ent-kaurene synthase-like 1 (738 aa).

Mg(2+) is bound by residues aspartate 487, aspartate 491, asparagine 631, aspartate 632, and glutamate 639. Positions aspartate 487–aspartate 491 match the DDXXD motif motif.

This sequence belongs to the terpene synthase family. It depends on Mg(2+) as a cofactor.

It carries out the reaction ent-copalyl diphosphate = ent-kaur-16-ene + diphosphate. It participates in secondary metabolite biosynthesis; terpenoid biosynthesis. Its function is as follows. Diterpene cyclase involved in the biosynthesis of labdane-related diterpenoids (LRDs) natural products. Catalyzes the cyclization of ent-CDP into ent-kaurene. In Ricinus communis (Castor bean), this protein is Ent-kaurene synthase-like 1.